Consider the following 207-residue polypeptide: uncharacterized protein (207 aa).

Disordered stretches follow at residues 1–81 (MNPT…GNTR) and 140–169 (TSQS…PPKK). Residues 21 to 40 (FEQTNSSASLTQKNSSSETE) show a composition bias toward polar residues. Basic residues predominate over residues 58 to 70 (PTKRGSGRGRGRS). The span at 140 to 152 (TSQSIDAQPTPSQ) shows a compositional bias: polar residues. Basic and acidic residues predominate over residues 156–165 (AHHEPHEKRG).

It localises to the nucleus. The protein resides in the nucleolus. This is an uncharacterized protein from Schizosaccharomyces pombe (strain 972 / ATCC 24843) (Fission yeast).